The sequence spans 486 residues: 6-phosphogluconate dehydrogenase, decarboxylating 2 (486 aa).

Residues 12 to 17 (GLAVMG), 35 to 37 (NRT), 79 to 81 (VKA), and Asn107 each bind NADP(+). Residues Asn107 and 133–135 (SGG) each bind substrate. The active-site Proton acceptor is Lys188. 191–192 (HN) provides a ligand contact to substrate. The active-site Proton donor is the Glu195. Substrate-binding residues include Tyr196, Lys266, Arg293, Arg456, and His462. Residues 484 to 486 (SKI) carry the Microbody targeting signal motif.

It belongs to the 6-phosphogluconate dehydrogenase family. Forms homodimer. Forms heterodimers with PGD1 or PGD3.

It is found in the cytoplasm. It localises to the cytosol. The protein localises to the peroxisome. It carries out the reaction 6-phospho-D-gluconate + NADP(+) = D-ribulose 5-phosphate + CO2 + NADPH. The protein operates within carbohydrate degradation; pentose phosphate pathway; D-ribulose 5-phosphate from D-glucose 6-phosphate (oxidative stage): step 3/3. Catalyzes the oxidative decarboxylation of 6-phosphogluconate to ribulose 5-phosphate and CO(2), with concomitant reduction of NADP to NADPH. Required for guided growth of the male gametophytes and interaction between the pollen tube and the ovule. The protein is 6-phosphogluconate dehydrogenase, decarboxylating 2 of Arabidopsis thaliana (Mouse-ear cress).